The following is a 611-amino-acid chain: DNA mismatch repair protein MutL (611 aa).

Belongs to the DNA mismatch repair MutL/HexB family.

In terms of biological role, this protein is involved in the repair of mismatches in DNA. It is required for dam-dependent methyl-directed DNA mismatch repair. May act as a 'molecular matchmaker', a protein that promotes the formation of a stable complex between two or more DNA-binding proteins in an ATP-dependent manner without itself being part of a final effector complex. The polypeptide is DNA mismatch repair protein MutL (Borreliella afzelii (strain PKo) (Borrelia afzelii)).